The primary structure comprises 635 residues: Biosynthetic arginine decarboxylase (635 aa).

Lysine 100 is subject to N6-(pyridoxal phosphate)lysine. 282–292 (LDIGGGLGVDY) provides a ligand contact to substrate.

The protein belongs to the Orn/Lys/Arg decarboxylase class-II family. SpeA subfamily. Mg(2+) serves as cofactor. It depends on pyridoxal 5'-phosphate as a cofactor.

It catalyses the reaction L-arginine + H(+) = agmatine + CO2. It functions in the pathway amine and polyamine biosynthesis; agmatine biosynthesis; agmatine from L-arginine: step 1/1. Catalyzes the biosynthesis of agmatine from arginine. This Citrifermentans bemidjiense (strain ATCC BAA-1014 / DSM 16622 / JCM 12645 / Bem) (Geobacter bemidjiensis) protein is Biosynthetic arginine decarboxylase (speA).